The chain runs to 350 residues: ATPase GET3 (350 aa).

An ATP-binding site is contributed by 26–33; that stretch reads KGGVGKTT. D57 is an active-site residue. The ATP site is built by E243 and N270. The Zn(2+) site is built by C282 and C285.

This sequence belongs to the arsA ATPase family. Homodimer. Component of the Golgi to ER traffic (GET) complex, which is composed of GET1, GET2 and GET3. Within the complex, GET1 and GET2 form a heterotetramer which is stabilized by phosphatidylinositol binding and which binds to the GET3 homodimer. Interacts with the chloride channel protein GEF1.

Its subcellular location is the cytoplasm. It is found in the endoplasmic reticulum. It localises to the golgi apparatus. ATPase required for the post-translational delivery of tail-anchored (TA) proteins to the endoplasmic reticulum. Recognizes and selectively binds the transmembrane domain of TA proteins in the cytosol. This complex then targets to the endoplasmic reticulum by membrane-bound receptors GET1 and GET2, where the tail-anchored protein is released for insertion. This process is regulated by ATP binding and hydrolysis. ATP binding drives the homodimer towards the closed dimer state, facilitating recognition of newly synthesized TA membrane proteins. ATP hydrolysis is required for insertion. Subsequently, the homodimer reverts towards the open dimer state, lowering its affinity for the GET1-GET2 receptor, and returning it to the cytosol to initiate a new round of targeting. Cooperates with the HDEL receptor ERD2 to mediate the ATP-dependent retrieval of resident ER proteins that contain a C-terminal H-D-E-L retention signal from the Golgi to the ER. Involved in low-level resistance to the oxyanions arsenite and arsenate, and in heat tolerance. The sequence is that of ATPase GET3 from Candida albicans (strain SC5314 / ATCC MYA-2876) (Yeast).